A 322-amino-acid chain; its full sequence is Structural glycoprotein p40 (322 aa).

Residues Asn130, Asn283, and Asn290 are each glycosylated (N-linked (GlcNAc...) asparagine; by host).

This sequence belongs to the baculoviridae gp41 family.

The protein resides in the virion. In Heliothis zea nuclear polyhedrosis virus (HzSNPV), this protein is Structural glycoprotein p40 (P40).